Reading from the N-terminus, the 108-residue chain is DIQMTQTTSSLSASLGDRVTISCRASQDINNYLNWYQQKPDGTVKLLIYYTSRLHSGVPSRFSGSGSGTDYSLTISNLEQEDIATYFCQQGKTLPRTFGGGTKLEIKR.

Residues 1–23 (DIQMTQTTSSLSASLGDRVTISC) form a framework-1 region. A disulfide bond links cysteine 23 and cysteine 88. The segment at 24–34 (RASQDINNYLN) is complementarity-determining-1. Residues 35 to 49 (WYQQKPDGTVKLLIY) form a framework-2 region. The interval 50–56 (YTSRLHS) is complementarity-determining-2. The tract at residues 57–88 (GVPSRFSGSGSGTDYSLTISNLEQEDIATYFC) is framework-3. The interval 89 to 97 (QQGKTLPRT) is complementarity-determining-3. A framework-4 region spans residues 98-108 (FGGGTKLEIKR).

The sequence is that of Ig kappa chain V-V region HP 124E1 from Mus musculus (Mouse).